Here is a 423-residue protein sequence, read N- to C-terminus: D-tagatose-1,6-bisphosphate aldolase subunit GatZ (423 aa).

Belongs to the GatZ/KbaZ family. GatZ subfamily. As to quaternary structure, forms a complex with GatY.

The protein operates within carbohydrate metabolism; D-tagatose 6-phosphate degradation; D-glyceraldehyde 3-phosphate and glycerone phosphate from D-tagatose 6-phosphate: step 2/2. Component of the tagatose-1,6-bisphosphate aldolase GatYZ that is required for full activity and stability of the Y subunit. Could have a chaperone-like function for the proper and stable folding of GatY. When expressed alone, GatZ does not show any aldolase activity. Is involved in the catabolism of galactitol. The polypeptide is D-tagatose-1,6-bisphosphate aldolase subunit GatZ (Salmonella dublin (strain CT_02021853)).